The chain runs to 102 residues: Small ribosomal subunit protein uS10 (102 aa).

This sequence belongs to the universal ribosomal protein uS10 family. As to quaternary structure, part of the 30S ribosomal subunit.

Involved in the binding of tRNA to the ribosomes. The sequence is that of Small ribosomal subunit protein uS10 from Mesorhizobium japonicum (strain LMG 29417 / CECT 9101 / MAFF 303099) (Mesorhizobium loti (strain MAFF 303099)).